Here is a 386-residue protein sequence, read N- to C-terminus: Patatin group M-2 (386 aa).

The N-terminal stretch at 1-23 is a signal peptide; sequence MATTKSFLILFFMILATTSSTCA. A PNPLA domain is found at 32–229; the sequence is LSIDGGGIKG…TVGDPALLSL (198 aa). The GXGXXG motif lies at 36 to 41; it reads GGGIKG. Positions 75-79 match the GXSXG motif; that stretch reads GTSTG. The Nucleophile role is filled by S77. A glycan (N-linked (GlcNAc...) asparagine) is linked at N115. Residue D215 is the Proton acceptor of the active site. A DGA/G motif is present at residues 215–217; the sequence is DGG. The stretch at 321–384 forms a coiled coil; that stretch reads ENALTGTTTE…DRKKLRANKA (64 aa).

The protein belongs to the patatin family. As to expression, tuber.

The protein resides in the vacuole. Its function is as follows. Probable lipolytic acyl hydrolase (LAH), an activity which is thought to be involved in the response of tubers to pathogens. This chain is Patatin group M-2, found in Solanum tuberosum (Potato).